A 369-amino-acid polypeptide reads, in one-letter code: Glutamine synthetase 2 cytoplasmic (369 aa).

The region spanning 32 to 112 is the GS beta-grasp domain; that stretch reads VQATYVWIDG…VMCDTYKFDG (81 aa). Positions 119 to 369 constitute a GS catalytic domain; it reads KRKTCLEVAN…AILRTICLDE (251 aa).

The protein belongs to the glutamine synthetase family. In terms of assembly, homooctamer.

The protein resides in the cytoplasm. The enzyme catalyses L-glutamate + NH4(+) + ATP = L-glutamine + ADP + phosphate + H(+). The sequence is that of Glutamine synthetase 2 cytoplasmic (Gs2) from Drosophila melanogaster (Fruit fly).